Here is a 452-residue protein sequence, read N- to C-terminus: Probable glycine dehydrogenase (decarboxylating) subunit 1 (452 aa).

Belongs to the GcvP family. N-terminal subunit subfamily. The glycine cleavage system is composed of four proteins: P, T, L and H. In this organism, the P 'protein' is a heterodimer of two subunits.

It carries out the reaction N(6)-[(R)-lipoyl]-L-lysyl-[glycine-cleavage complex H protein] + glycine + H(+) = N(6)-[(R)-S(8)-aminomethyldihydrolipoyl]-L-lysyl-[glycine-cleavage complex H protein] + CO2. Its function is as follows. The glycine cleavage system catalyzes the degradation of glycine. The P protein binds the alpha-amino group of glycine through its pyridoxal phosphate cofactor; CO(2) is released and the remaining methylamine moiety is then transferred to the lipoamide cofactor of the H protein. The sequence is that of Probable glycine dehydrogenase (decarboxylating) subunit 1 from Nitrosospira multiformis (strain ATCC 25196 / NCIMB 11849 / C 71).